Reading from the N-terminus, the 893-residue chain is 104 kDa microneme/rhoptry antigen (893 aa).

The signal sequence occupies residues Met1–Ala19. Disordered regions lie at residues Ser492–Lys666, Lys681–Lys799, and Lys818–Asp873. 2 stretches are compositionally biased toward basic and acidic residues: residues Ser525–Pro565 and Lys573–Lys591. A compositionally biased stretch (low complexity) spans Arg595–Lys606. Composition is skewed to basic and acidic residues over residues Glu731–Thr755, Glu788–Thr797, and Lys818–Val830. Residues Asp831 to Asp841 show a composition bias toward acidic residues. The segment covering Ser851–Pro869 has biased composition (basic residues). Asp873 is lipidated: GPI-anchor amidated aspartate. The propeptide at Ser874–Leu893 is removed in mature form.

It is found in the cell membrane. The chain is 104 kDa microneme/rhoptry antigen from Theileria annulata.